We begin with the raw amino-acid sequence, 61 residues long: Photosystem II reaction center protein K (61 aa).

The propeptide occupies 1–24 (MPNILSLTCICFNSVLYPTSFFFA). Residues 32 to 52 (IFNPIVDIMPVIPLFFFLLAF) traverse the membrane as a helical segment.

The protein belongs to the PsbK family. PSII is composed of 1 copy each of membrane proteins PsbA, PsbB, PsbC, PsbD, PsbE, PsbF, PsbH, PsbI, PsbJ, PsbK, PsbL, PsbM, PsbT, PsbX, PsbY, PsbZ, Psb30/Ycf12, at least 3 peripheral proteins of the oxygen-evolving complex and a large number of cofactors. It forms dimeric complexes. Detected in both etioplasts and green leaves; PSII is only assembled in green leaves.

Its subcellular location is the plastid. It is found in the chloroplast thylakoid membrane. Its function is as follows. One of the components of the core complex of photosystem II (PSII). PSII is a light-driven water:plastoquinone oxidoreductase that uses light energy to abstract electrons from H(2)O, generating O(2) and a proton gradient subsequently used for ATP formation. It consists of a core antenna complex that captures photons, and an electron transfer chain that converts photonic excitation into a charge separation. In Hordeum vulgare (Barley), this protein is Photosystem II reaction center protein K.